The chain runs to 325 residues: Secreted RxLR effector protein RXLR-C07 (325 aa).

Positions 1–19 are cleaved as a signal peptide; sequence MQGVRITILWCIVLATIYA. TPR repeat units follow at residues 37–75, 92–125, 134–167, 218–251, and 260–293; these read RGLRNAGMKANDERMFKDAIEKLRHAISLLHNRVFGEER, AQILNDYGSVLIRTKQYDEAIEVLEDSVAMIEKI, GLSLRSLADAYMEKKAFKSAIKRYKTLRKHVKKG, AELYMELSSAHVEVGEIDDALRAAETASAIFLQR, and AFSLNALAGVKMQQKKVDEAIDLLDRAHNIAVSI. The short motif at 37 to 75 is the RxLR-dEER element; that stretch reads RGLRNAGMKANDERMFKDAIEKLRHAISLLHNRVFGEER.

It belongs to the RxLR effector family.

The protein resides in the secreted. It is found in the host cytoplasm. It localises to the host nucleus. The protein localises to the host nucleolus. In terms of biological role, secreted effector that suppresses pattern-triggered immunity (PTI) in plant host. In Plasmopara halstedii (Downy mildew of sunflower), this protein is Secreted RxLR effector protein RXLR-C07.